The primary structure comprises 315 residues: Alpha- and gamma-adaptin-binding protein p34 (315 aa).

The disordered stretch occupies residues 197–234; it reads IGSADPCHPEQPHLPAADSTESLSDHRGGASNTTDAQV. Phosphoserine occurs at positions 310 and 311.

As to quaternary structure, associated with AP-1 and AP-2 complexes. Widely expressed, including in skin and keratinocytes, with highest levels in adrenal gland, rectum and thymus.

Its subcellular location is the cytoplasm. It localises to the cytosol. In terms of biological role, may be involved in endocytic recycling of growth factor receptors such as EGFR. This Homo sapiens (Human) protein is Alpha- and gamma-adaptin-binding protein p34 (AAGAB).